The sequence spans 408 residues: Multidrug resistance protein MdtG (408 aa).

10 helical membrane-spanning segments follow: residues 16-36 (LIVA…VMPF), 58-78 (IVFS…GGLA), 92-112 (LGMG…QFLI), 115-135 (ALLG…ATQV), 146-166 (TLST…GLLA), 173-193 (PVFF…LFCI), 224-244 (LFVT…ILTL), 256-276 (VAFI…LSAP), 290-310 (ILIT…YVQT), and 378-398 (AVFL…WNSL).

It belongs to the major facilitator superfamily. DHA1 family. MdtG (TC 2.A.1.2.20) subfamily.

Its subcellular location is the cell inner membrane. Functionally, confers resistance to fosfomycin and deoxycholate. The protein is Multidrug resistance protein MdtG of Escherichia coli O17:K52:H18 (strain UMN026 / ExPEC).